Consider the following 275-residue polypeptide: Elongation factor Ts (275 aa).

An involved in Mg(2+) ion dislocation from EF-Tu region spans residues 80–83 (TDFV).

The protein belongs to the EF-Ts family.

The protein resides in the cytoplasm. Functionally, associates with the EF-Tu.GDP complex and induces the exchange of GDP to GTP. It remains bound to the aminoacyl-tRNA.EF-Tu.GTP complex up to the GTP hydrolysis stage on the ribosome. This is Elongation factor Ts from Kineococcus radiotolerans (strain ATCC BAA-149 / DSM 14245 / SRS30216).